Here is a 1318-residue protein sequence, read N- to C-terminus: Ubiquitin carboxyl-terminal hydrolase 19 (1318 aa).

The disordered stretch occupies residues 1 to 109 (MSGGASATGP…GACEDPHDLL (109 aa)). Topologically, residues 1–1291 (MSGGASATGP…TTPDEGCLRY (1291 aa)) are cytoplasmic. Over residues 28–44 (DRANQESKDGDPRKETG) the composition is skewed to basic and acidic residues. Residues 83-94 (PSSSGSASTPQE) show a composition bias toward polar residues. Residues 95-107 (EQTKEGACEDPHD) show a composition bias toward basic and acidic residues. In terms of domain architecture, CS 1 spans 113–202 (TPELLLDWRQ…VPMLTWPSLL (90 aa)). Residues 234 to 255 (KAVPPGNDPVSPAMVRSRNPGK) are disordered. Serine 244 carries the post-translational modification Phosphoserine. The CS 2 domain maps to 282-384 (LAFVKNDSYE…RQSQRWGGLE (103 aa)). Residues 390–479 (VGGAKVAVPT…PMPHSPVSGD (90 aa)) form a disordered region. Composition is skewed to basic and acidic residues over residues 420 to 436 (EEAR…RSED) and 447 to 457 (PMEHVTPKPET). The USP domain maps to 497–1214 (TGLVNLGNTC…YAYVLFYRRR (718 aa)). The active-site Nucleophile is cysteine 506. Residues cysteine 791, cysteine 794, cysteine 808, cysteine 811, cysteine 817, cysteine 821, histidine 829, and cysteine 833 each contribute to the Zn(2+) site. The segment at 791–833 (CAACQRKQQSEDEKLKRCTRCYRVGYCNQLCQKTHWPDHKGLC) adopts an MYND-type zinc-finger fold. The Proton acceptor role is filled by histidine 1165. Residues 1218 to 1232 (VERPPRAGHSEHHPD) are compositionally biased toward basic and acidic residues. Residues 1218-1239 (VERPPRAGHSEHHPDLGPAAEA) are disordered. The helical transmembrane segment at 1292-1312 (FVLGTVAALVALVLNVFYPLV) threads the bilayer. The Lumenal segment spans residues 1313–1318 (SQSRWR).

Belongs to the peptidase C19 family. In terms of assembly, interacts with RNF123. Interacts with BIRC2/c-IAP1, BIRC3/c-IAP2 and XIAP/BIRC4. Interacts with HIF1A (via N-terminus). Interacts (via N-terminus) with HSP90AA1; this interaction activates the deubiquitinase activity of USP19.

The protein resides in the endoplasmic reticulum membrane. The enzyme catalyses Thiol-dependent hydrolysis of ester, thioester, amide, peptide and isopeptide bonds formed by the C-terminal Gly of ubiquitin (a 76-residue protein attached to proteins as an intracellular targeting signal).. Functionally, deubiquitinating enzyme that regulates the degradation of various proteins by removing ubiquitin moieties, thereby preventing their proteasomal degradation. Stabilizes RNF123, which promotes CDKN1B degradation and contributes to cell proliferation. Decreases the levels of ubiquitinated proteins during skeletal muscle formation and acts to repress myogenesis. Modulates transcription of major myofibrillar proteins. Also involved in turnover of endoplasmic-reticulum-associated degradation (ERAD) substrates. Mechanistically, deubiquitinates and thereby stabilizes several E3 ligases involved in the ERAD pathway including SYVN1 or MARCHF6. Regulates the stability of other E3 ligases including BIRC2/c-IAP1 and BIRC3/c-IAP2 by preventing their ubiquitination. Required for cells to mount an appropriate response to hypoxia by rescuing HIF1A from degradation in a non-catalytic manner and by mediating the deubiquitination of FUNDC1. Attenuates mitochondrial damage and ferroptosis by targeting and stabilizing NADPH oxidase 4/NOX4. Negatively regulates TNF-alpha- and IL-1beta-triggered NF-kappa-B activation by hydrolyzing 'Lys-27'- and 'Lys-63'-linked polyubiquitin chains from MAP3K7. Modulates also the protein level and aggregation of polyQ-expanded huntingtin/HTT through HSP90AA1. This Homo sapiens (Human) protein is Ubiquitin carboxyl-terminal hydrolase 19 (USP19).